A 123-amino-acid polypeptide reads, in one-letter code: Small ribosomal subunit protein uS12c (123 aa).

A disordered region spans residues 9–31 (RNKRQAAENKTKSPALQRSPQRR).

This sequence belongs to the universal ribosomal protein uS12 family. In terms of assembly, part of the 30S ribosomal subunit.

The protein localises to the plastid. Its subcellular location is the chloroplast. Functionally, with S4 and S5 plays an important role in translational accuracy. Located at the interface of the 30S and 50S subunits. In Spirogyra maxima (Green alga), this protein is Small ribosomal subunit protein uS12c (rps12).